The chain runs to 73 residues: uncharacterized protein (73 aa).

It belongs to the asfivirus DP63R family.

This is an uncharacterized protein from Ornithodoros (relapsing fever ticks).